The following is a 1751-amino-acid chain: Non-reducing polyketide synthase afvB (1751 aa).

The segment at 19–249 is N-terminal acylcarrier protein transacylase domain (SAT); sequence FRRLRLHSKC…PLPVYGGPCH (231 aa). A Ketosynthase family 3 (KS3) domain is found at 381–811; that stretch reads HEKIAVIGMS…GGNTSLLLEE (431 aa). Residues cysteine 554, histidine 689, and histidine 730 each act as for beta-ketoacyl synthase activity in the active site. The malonyl-CoA:ACP transacylase (MAT) domain stretch occupies residues 910–1228; it reads FVFSGQGSFS…SMSALHSAGV (319 aa). Positions 1291 to 1607 are product template (PT) domain; the sequence is TALVHHILEE…PRILMSRFFD (317 aa). Residues 1295 to 1429 are N-terminal hotdog fold; it reads HHILEESFGK…GVVTCGDSHS (135 aa). One can recognise a PKS/mFAS DH domain in the interval 1295-1603; that stretch reads HHILEESFGK…LRPLPRILMS (309 aa). The active-site Proton acceptor; for dehydratase activity is the histidine 1327. The tract at residues 1456–1603 is C-terminal hotdog fold; that stretch reads LASRVSKDLV…LRPLPRILMS (148 aa). The Proton donor; for dehydratase activity role is filled by aspartate 1514. The disordered stretch occupies residues 1610–1670; the sequence is DSQYGQMAQQ…KAPISGSWPN (61 aa). The segment covering 1612–1657 has biased composition (polar residues); that stretch reads QYGQMAQQEPSTALPSTPQHTSSAKTTESTPSQQDESDNTSLATPE. Residues 1670-1747 form the Carrier domain; it reads NANSQLVRDA…DLKAYLEGNQ (78 aa). Serine 1707 is subject to O-(pantetheine 4'-phosphoryl)serine.

It depends on pantetheine 4'-phosphate as a cofactor. Expressed mainly in sclerotia, with expression levels 20-fold and 10-fold greater than the expression levels of this gene found in mycelium and conidia, respectively.

Its pathway is secondary metabolite biosynthesis. Functionally, non-reducing polyketide synthase (NRPKS); part of the gene cluster that mediates the biosynthesis of aflavarin, a bicoumarin that exhibits anti-insectan activity against the fungivorous beetle C.hemipterus. Catalyzes the formation of the aromatic polyketide from acetyl coenzyme A and seven malonyl coenzyme A molecules. This chain is Non-reducing polyketide synthase afvB, found in Aspergillus flavus (strain ATCC 200026 / FGSC A1120 / IAM 13836 / NRRL 3357 / JCM 12722 / SRRC 167).